A 217-amino-acid polypeptide reads, in one-letter code: Response regulator RR06 (217 aa).

Residues 2–115 (NILVADDEEM…LLVKRIKALI (114 aa)) form the Response regulatory domain. Residue D51 is modified to 4-aspartylphosphate. The ompR/PhoB-type DNA-binding region spans 122–217 (EDIWRYQDVT…VKNVGYKISL (96 aa)).

Phosphorylated at threonine residues by StkP; threonine phosphorylation enhances RR06 binding to DNA and may also increase expression of CbpA. May be de-phosphorylated by PhpP.

Functionally, member of the two-component regulatory system HK06/RR06 involved in regulation of target genes, including choline-binding protein CbpA. Binds to the promoter region of CbpA and directly activates transcription. The protein is Response regulator RR06 of Streptococcus pneumoniae serotype 2 (strain D39 / NCTC 7466).